We begin with the raw amino-acid sequence, 362 residues long: Holliday junction branch migration complex subunit RuvB (362 aa).

Residues 4 to 186 (PDRPQRLVEQ…FGIPLRMQFY (183 aa)) are large ATPase domain (RuvB-L). ATP-binding positions include I25, R26, G67, K70, T71, T72, 133–135 (EDF), R176, Y186, and R223. T71 contacts Mg(2+). Positions 187 to 257 (EPEELQLIVA…AAGGALTRLE (71 aa)) are small ATPAse domain (RuvB-S). Residues 260 to 362 (RLGFDAMDRR…GTPEGEGEDV (103 aa)) form a head domain (RuvB-H) region. R296, R315, and R320 together coordinate DNA.

Belongs to the RuvB family. As to quaternary structure, homohexamer. Forms an RuvA(8)-RuvB(12)-Holliday junction (HJ) complex. HJ DNA is sandwiched between 2 RuvA tetramers; dsDNA enters through RuvA and exits via RuvB. An RuvB hexamer assembles on each DNA strand where it exits the tetramer. Each RuvB hexamer is contacted by two RuvA subunits (via domain III) on 2 adjacent RuvB subunits; this complex drives branch migration. In the full resolvosome a probable DNA-RuvA(4)-RuvB(12)-RuvC(2) complex forms which resolves the HJ.

The protein resides in the cytoplasm. The enzyme catalyses ATP + H2O = ADP + phosphate + H(+). The RuvA-RuvB-RuvC complex processes Holliday junction (HJ) DNA during genetic recombination and DNA repair, while the RuvA-RuvB complex plays an important role in the rescue of blocked DNA replication forks via replication fork reversal (RFR). RuvA specifically binds to HJ cruciform DNA, conferring on it an open structure. The RuvB hexamer acts as an ATP-dependent pump, pulling dsDNA into and through the RuvAB complex. RuvB forms 2 homohexamers on either side of HJ DNA bound by 1 or 2 RuvA tetramers; 4 subunits per hexamer contact DNA at a time. Coordinated motions by a converter formed by DNA-disengaged RuvB subunits stimulates ATP hydrolysis and nucleotide exchange. Immobilization of the converter enables RuvB to convert the ATP-contained energy into a lever motion, pulling 2 nucleotides of DNA out of the RuvA tetramer per ATP hydrolyzed, thus driving DNA branch migration. The RuvB motors rotate together with the DNA substrate, which together with the progressing nucleotide cycle form the mechanistic basis for DNA recombination by continuous HJ branch migration. Branch migration allows RuvC to scan DNA until it finds its consensus sequence, where it cleaves and resolves cruciform DNA. The protein is Holliday junction branch migration complex subunit RuvB of Rhodospirillum centenum (strain ATCC 51521 / SW).